The sequence spans 346 residues: UDP-3-O-acylglucosamine N-acyltransferase (346 aa).

H253 (proton acceptor) is an active-site residue.

This sequence belongs to the transferase hexapeptide repeat family. LpxD subfamily. Homotrimer.

The catalysed reaction is a UDP-3-O-[(3R)-3-hydroxyacyl]-alpha-D-glucosamine + a (3R)-hydroxyacyl-[ACP] = a UDP-2-N,3-O-bis[(3R)-3-hydroxyacyl]-alpha-D-glucosamine + holo-[ACP] + H(+). It participates in bacterial outer membrane biogenesis; LPS lipid A biosynthesis. Its function is as follows. Catalyzes the N-acylation of UDP-3-O-acylglucosamine using 3-hydroxyacyl-ACP as the acyl donor. Is involved in the biosynthesis of lipid A, a phosphorylated glycolipid that anchors the lipopolysaccharide to the outer membrane of the cell. The sequence is that of UDP-3-O-acylglucosamine N-acyltransferase from Rickettsia prowazekii (strain Madrid E).